The chain runs to 90 residues: Small ribosomal subunit protein bS20 (90 aa).

Belongs to the bacterial ribosomal protein bS20 family.

Binds directly to 16S ribosomal RNA. The polypeptide is Small ribosomal subunit protein bS20 (Mesomycoplasma hyopneumoniae (strain J / ATCC 25934 / NCTC 10110) (Mycoplasma hyopneumoniae)).